Consider the following 151-residue polypeptide: Ribonuclease H (151 aa).

Residues 2–143 (SDDWVEIYTD…ADLLANRGVV (142 aa)) enclose the RNase H type-1 domain. Mg(2+)-binding residues include Asp-11, Glu-49, Asp-71, and Asp-135.

Belongs to the RNase H family. As to quaternary structure, monomer. Mg(2+) is required as a cofactor.

Its subcellular location is the cytoplasm. The catalysed reaction is Endonucleolytic cleavage to 5'-phosphomonoester.. Its function is as follows. Endonuclease that specifically degrades the RNA of RNA-DNA hybrids. The chain is Ribonuclease H from Stutzerimonas stutzeri (strain A1501) (Pseudomonas stutzeri).